Reading from the N-terminus, the 454-residue chain is Bifunctional protein GlmU (454 aa).

A pyrophosphorylase region spans residues 1 to 227; sequence MSKLSVVILA…MMEVEGANNR (227 aa). Residues 9–12, Lys-23, Gln-74, 79–80, 101–103, Gly-138, Glu-152, Asn-167, and Asn-225 contribute to the UDP-N-acetyl-alpha-D-glucosamine site; these read LAAG, GT, and YGD. A Mg(2+)-binding site is contributed by Asp-103. Residue Asn-225 participates in Mg(2+) binding. The segment at 228–248 is linker; it reads LQLAALERYFQRKQATALLLA. The N-acetyltransferase stretch occupies residues 249 to 454; the sequence is GVSLADPERF…ADWERPSKKK (206 aa). 2 residues coordinate UDP-N-acetyl-alpha-D-glucosamine: Arg-331 and Lys-349. Residue His-361 is the Proton acceptor of the active site. Residues Tyr-364 and Asn-375 each coordinate UDP-N-acetyl-alpha-D-glucosamine. Acetyl-CoA is bound by residues Ala-378, 384-385, Ser-403, Ala-421, and Arg-438; that span reads NY.

The protein in the N-terminal section; belongs to the N-acetylglucosamine-1-phosphate uridyltransferase family. It in the C-terminal section; belongs to the transferase hexapeptide repeat family. Homotrimer. It depends on Mg(2+) as a cofactor.

It is found in the cytoplasm. It catalyses the reaction alpha-D-glucosamine 1-phosphate + acetyl-CoA = N-acetyl-alpha-D-glucosamine 1-phosphate + CoA + H(+). It carries out the reaction N-acetyl-alpha-D-glucosamine 1-phosphate + UTP + H(+) = UDP-N-acetyl-alpha-D-glucosamine + diphosphate. It participates in nucleotide-sugar biosynthesis; UDP-N-acetyl-alpha-D-glucosamine biosynthesis; N-acetyl-alpha-D-glucosamine 1-phosphate from alpha-D-glucosamine 6-phosphate (route II): step 2/2. Its pathway is nucleotide-sugar biosynthesis; UDP-N-acetyl-alpha-D-glucosamine biosynthesis; UDP-N-acetyl-alpha-D-glucosamine from N-acetyl-alpha-D-glucosamine 1-phosphate: step 1/1. It functions in the pathway bacterial outer membrane biogenesis; LPS lipid A biosynthesis. Functionally, catalyzes the last two sequential reactions in the de novo biosynthetic pathway for UDP-N-acetylglucosamine (UDP-GlcNAc). The C-terminal domain catalyzes the transfer of acetyl group from acetyl coenzyme A to glucosamine-1-phosphate (GlcN-1-P) to produce N-acetylglucosamine-1-phosphate (GlcNAc-1-P), which is converted into UDP-GlcNAc by the transfer of uridine 5-monophosphate (from uridine 5-triphosphate), a reaction catalyzed by the N-terminal domain. In Actinobacillus succinogenes (strain ATCC 55618 / DSM 22257 / CCUG 43843 / 130Z), this protein is Bifunctional protein GlmU.